The chain runs to 102 residues: NADH-quinone oxidoreductase subunit K (102 aa).

3 helical membrane-spanning segments follow: residues 5–25 (IAHY…GIFL), 31–51 (IVIL…FVAF), and 66–86 (FVLT…VVFF).

The protein belongs to the complex I subunit 4L family. NDH-1 is composed of 14 different subunits. Subunits NuoA, H, J, K, L, M, N constitute the membrane sector of the complex.

It is found in the cell inner membrane. The catalysed reaction is a quinone + NADH + 5 H(+)(in) = a quinol + NAD(+) + 4 H(+)(out). Its function is as follows. NDH-1 shuttles electrons from NADH, via FMN and iron-sulfur (Fe-S) centers, to quinones in the respiratory chain. The immediate electron acceptor for the enzyme in this species is believed to be ubiquinone. Couples the redox reaction to proton translocation (for every two electrons transferred, four hydrogen ions are translocated across the cytoplasmic membrane), and thus conserves the redox energy in a proton gradient. The polypeptide is NADH-quinone oxidoreductase subunit K (Brucella abortus (strain S19)).